The following is a 121-amino-acid chain: Urotensin-2 (121 aa).

The signal sequence occupies residues 1–19 (MSKLVPCLLLLGCLGLLFA). Residues 20 to 106 (LPVPDSRKEP…HLLARIKKPY (87 aa)) constitute a propeptide that is removed on maturation. A disulfide bridge links cysteine 115 with cysteine 120.

This sequence belongs to the urotensin-2 family.

It localises to the secreted. Highly potent vasoconstrictor. The sequence is that of Urotensin-2 (UTS2) from Sus scrofa (Pig).